We begin with the raw amino-acid sequence, 224 residues long: Flagellar L-ring protein (224 aa).

Positions 1 to 15 (MARYLVLAVALLLAA) are cleaved as a signal peptide. A lipid anchor (N-palmitoyl cysteine) is attached at cysteine 16. Cysteine 16 is lipidated: S-diacylglycerol cysteine.

The protein belongs to the FlgH family. In terms of assembly, the basal body constitutes a major portion of the flagellar organelle and consists of four rings (L,P,S, and M) mounted on a central rod.

It is found in the cell outer membrane. The protein localises to the bacterial flagellum basal body. Functionally, assembles around the rod to form the L-ring and probably protects the motor/basal body from shearing forces during rotation. This is Flagellar L-ring protein from Shewanella baltica (strain OS185).